The sequence spans 501 residues: ATP synthase subunit alpha (501 aa).

169–176 (GDRQTGKT) is an ATP binding site.

It belongs to the ATPase alpha/beta chains family. In terms of assembly, F-type ATPases have 2 components, CF(1) - the catalytic core - and CF(0) - the membrane proton channel. CF(1) has five subunits: alpha(3), beta(3), gamma(1), delta(1), epsilon(1). CF(0) has three main subunits: a(1), b(2) and c(9-12). The alpha and beta chains form an alternating ring which encloses part of the gamma chain. CF(1) is attached to CF(0) by a central stalk formed by the gamma and epsilon chains, while a peripheral stalk is formed by the delta and b chains.

It is found in the cell membrane. It catalyses the reaction ATP + H2O + 4 H(+)(in) = ADP + phosphate + 5 H(+)(out). Produces ATP from ADP in the presence of a proton gradient across the membrane. The alpha chain is a regulatory subunit. This chain is ATP synthase subunit alpha, found in Streptococcus pneumoniae (strain 70585).